Reading from the N-terminus, the 127-residue chain is Small ribosomal subunit protein uS11 (127 aa).

The protein belongs to the universal ribosomal protein uS11 family. Part of the 30S ribosomal subunit. Interacts with proteins S7 and S18. Binds to IF-3.

In terms of biological role, located on the platform of the 30S subunit, it bridges several disparate RNA helices of the 16S rRNA. Forms part of the Shine-Dalgarno cleft in the 70S ribosome. The sequence is that of Small ribosomal subunit protein uS11 from Rickettsia felis (strain ATCC VR-1525 / URRWXCal2) (Rickettsia azadi).